The sequence spans 269 residues: Xyloglucan endotransglucosylase/hydrolase protein 24 (269 aa).

Residues 1 to 21 (MSPFKIFFFTTLLVAAFSVSA) form the signal peptide. Residues 22 to 212 (ADFNTDVNVA…WSKAPFMASY (191 aa)) enclose the GH16 domain. Glutamate 98 serves as the catalytic Nucleophile. The Proton donor role is filled by glutamate 102. Position 102 (glutamate 102) interacts with xyloglucan. Asparagine 106 carries N-linked (GlcNAc...) asparagine glycosylation. Residues 115 to 117 (HTN), 125 to 127 (DKE), 191 to 192 (DW), glycine 196, and arginine 256 each bind xyloglucan. Cysteine 251 and cysteine 265 are disulfide-bonded.

Belongs to the glycosyl hydrolase 16 family. XTH group 2 subfamily. Post-translationally, contains at least one intrachain disulfide bond essential for its enzymatic activity. In terms of processing, N-glycosylated; essential for its enzymatic activity. As to expression, highly expressed. Predominantly expressed in stems. Expressed in shoot apical meristems, also found in seedlings and meristems.

Its subcellular location is the secreted. The protein localises to the cell wall. The protein resides in the extracellular space. It localises to the apoplast. It carries out the reaction breaks a beta-(1-&gt;4) bond in the backbone of a xyloglucan and transfers the xyloglucanyl segment on to O-4 of the non-reducing terminal glucose residue of an acceptor, which can be a xyloglucan or an oligosaccharide of xyloglucan.. Its function is as follows. Catalyzes xyloglucan endohydrolysis (XEH) and/or endotransglycosylation (XET). Cleaves and religates xyloglucan polymers, an essential constituent of the primary cell wall, and thereby participates in cell wall construction of growing tissues. May be required during development to modify the walls of cells under mechanical stress. This chain is Xyloglucan endotransglucosylase/hydrolase protein 24 (XTH24), found in Arabidopsis thaliana (Mouse-ear cress).